Reading from the N-terminus, the 58-residue chain is Small ribosomal subunit protein bS21 (58 aa).

Residues 32–42 (IRKREHYEKPS) show a composition bias toward basic and acidic residues. The segment at 32-58 (IRKREHYEKPSVRRKKKSEAARKRKFN) is disordered. Over residues 43-58 (VRRKKKSEAARKRKFN) the composition is skewed to basic residues.

The protein belongs to the bacterial ribosomal protein bS21 family.

The sequence is that of Small ribosomal subunit protein bS21 from Lachnospira eligens (strain ATCC 27750 / DSM 3376 / VPI C15-48 / C15-B4) (Eubacterium eligens).